A 418-amino-acid polypeptide reads, in one-letter code: Nuclear receptor coactivator 6 (418 aa).

2 disordered regions span residues 1–21 (EQIMTNQMQGNKAQFNSQNQS) and 77–98 (PPGPSPHMAQQHTDPATTANND). The interval 1-215 (EQIMTNQMQG…PPRKKKNCHQ (215 aa)) is TBP/GTF2A-binding region. The CREBBP-binding region stretch occupies residues 1–352 (EQIMTNQMQG…LPVSQNVHPP (352 aa)). Residues 1 to 418 (EQIMTNQMQG…YQESPQNSSS (418 aa)) form an NCOA1-binding region region. The interval 60–214 (VSNSPSQVMG…KPPRKKKNCH (155 aa)) is NCOA6IP-binding region. A compositionally biased stretch (polar residues) spans 84–98 (MAQQHTDPATTANND). Ser171 is subject to Phosphoserine. The LXXLL motif signature appears at 174–178 (LVNLL). The disordered stretch occupies residues 186–418 (HFGVNNKQNN…YQESPQNSSS (233 aa)). Residues 190–199 (NNKQNNTNAN) show a composition bias toward low complexity. Residues 200–212 (KQKKKKPPRKKKN) show a composition bias toward basic residues. Low complexity predominate over residues 269-279 (PLQQMPPQLMQ). The span at 282-310 (APPPQPPQQQPQPQLPQQQPQPQPPPPSQ) shows a compositional bias: pro residues. Positions 311 to 336 (PQSQQQQQQQQQQQQQQMMMMLMMQQ) are enriched in low complexity. Asymmetric dimethylarginine occurs at positions 342 and 353. The segment covering 358–370 (PDSQRVPMQQSGN) has biased composition (polar residues). An Asymmetric dimethylarginine modification is found at Arg391. Residues 399 to 418 (PLGSNSRKMVYQESPQNSSS) show a composition bias toward polar residues.

As to quaternary structure, monomer and homodimer. Interacts in vitro with the basal transcription factors GTF2A and TBP, suggesting an autonomous transactivation function. Interacts with NCOA1, CRSP3, RBM14, the histone acetyltransferase proteins EP300 and CREBBP, and with methyltransferase proteins NCOA6IP and PRMT2. Component of the MLL2/3 complex (also named ASCOM complex), at least composed of KMT2D/MLL2 or KMT2C/MLL3, ASH2L, RBBP5, WDR5, NCOA6, DPY30, KDM6A, PAXIP1/PTIP, PAGR1 and alpha- and beta-tubulin. Interacts with ZNF335; may enhance ligand-dependent transcriptional activation by nuclear hormone receptors. In terms of processing, phosphorylated.

The protein localises to the nucleus. Functionally, nuclear receptor coactivator that directly binds nuclear receptors and stimulates the transcriptional activities in a hormone-dependent fashion. Coactivate expression in an agonist- and AF2-dependent manner. May coactivate expression via a remodeling of chromatin and its interaction with histone acetyltransferase proteins. Involved in the coactivation of different nuclear receptors, such as for steroids (GR and ERs), retinoids (RARs and RXRs), thyroid hormone (TRs), vitamin D3 (VDR) and prostanoids (PPARs). Probably functions as a general coactivator, rather than just a nuclear receptor coactivator. May also be involved in the coactivation of the NF-kappa-B pathway. The sequence is that of Nuclear receptor coactivator 6 (Ncoa6) from Rattus norvegicus (Rat).